Here is a 309-residue protein sequence, read N- to C-terminus: Ribonuclease Z (309 aa).

Zn(2+) is bound by residues His63, His65, Asp67, His68, His141, Asp212, and His270. Catalysis depends on Asp67, which acts as the Proton acceptor.

The protein belongs to the RNase Z family. Homodimer. Zn(2+) serves as cofactor.

It carries out the reaction Endonucleolytic cleavage of RNA, removing extra 3' nucleotides from tRNA precursor, generating 3' termini of tRNAs. A 3'-hydroxy group is left at the tRNA terminus and a 5'-phosphoryl group is left at the trailer molecule.. Functionally, zinc phosphodiesterase, which displays some tRNA 3'-processing endonuclease activity. Probably involved in tRNA maturation, by removing a 3'-trailer from precursor tRNA. This is Ribonuclease Z from Lactobacillus gasseri (strain ATCC 33323 / DSM 20243 / BCRC 14619 / CIP 102991 / JCM 1131 / KCTC 3163 / NCIMB 11718 / NCTC 13722 / AM63).